We begin with the raw amino-acid sequence, 690 residues long: MNSNFNQHFERIKELRALLNKANYSYYVLDSPEIDDSVYDQLYRELIEIENIHPSLITDDSPSQRLGGVPSKGFKNVEHNIPLLSLDNAFNLNEVEAWYGRISKLISSENKNIKKVYDPELICELKIDGNAISLRYENGILTRATTRGDGKTGEDITTNIRTISTIPLRLLLENPPLWVEIRGEAFMPNNIFNKLNIERKNNDQPLFANPRNSCAGTLRQLDPKIVASRKLDFFAYSLYFPENWEPTDNNFKKPISQSESLEFLKNIGFKVNTTYETTKTLNEANKYYKYWEVKKDFLAYATDGIVVKIDKFEIQNLLGATNKAPRWAIAVKYPAEEKATKLRKIIFQVGRSGAVTPVAEFESIELAGTSVNRATLHNAKRLASLDLHYEDTIIVRKAGEIIPEVIRVIKEFRKVDAKLVQLPQNCPECNSKLILESNEAITKCINYRCAAKLKGLLRHWVSKGSMNIDGLGEKIINQLVNEGYVKSIADLYKLEIDSLLELERFGEKSANNLLIEINESKNKNWHKQLYGLGIPHIGEANAKSLSNNFNSIEELNAIAKESPEKISNIYGFGNEMKDAIVKWFDDSNNQTLIKELKAIGFSLKESLDSNYNSNQSNVFDGKSFVLTGTLDSLTRDEAKELIESAGGKVSSSISKKTDFLVSGEKAGSKLNKAQELGVKIINENELKLLL.

NAD(+)-binding positions include 36–40 (DSVYD), 85–86 (SL), and Glu124. Lys126 functions as the N6-AMP-lysine intermediate in the catalytic mechanism. Residues Arg147, Glu184, Lys308, and Lys332 each contribute to the NAD(+) site. 4 residues coordinate Zn(2+): Cys426, Cys429, Cys444, and Cys449. A BRCT domain is found at 614–690 (NQSNVFDGKS…INENELKLLL (77 aa)).

It belongs to the NAD-dependent DNA ligase family. LigA subfamily. Mg(2+) serves as cofactor. It depends on Mn(2+) as a cofactor.

The enzyme catalyses NAD(+) + (deoxyribonucleotide)n-3'-hydroxyl + 5'-phospho-(deoxyribonucleotide)m = (deoxyribonucleotide)n+m + AMP + beta-nicotinamide D-nucleotide.. In terms of biological role, DNA ligase that catalyzes the formation of phosphodiester linkages between 5'-phosphoryl and 3'-hydroxyl groups in double-stranded DNA using NAD as a coenzyme and as the energy source for the reaction. It is essential for DNA replication and repair of damaged DNA. This Prochlorococcus marinus (strain NATL2A) protein is DNA ligase.